The following is a 146-amino-acid chain: Large ribosomal subunit protein uL15 (146 aa).

Basic and acidic residues predominate over residues 1 to 13 (MKLHELKPAEGSR). The disordered stretch occupies residues 1 to 56 (MKLHELKPAEGSRKVRNRVGRGAATGNGKTSGRGQKGQKARSGGSVRPGFEGGQLP). Residues 23 to 35 (AATGNGKTSGRGQ) show a composition bias toward gly residues.

Belongs to the universal ribosomal protein uL15 family. As to quaternary structure, part of the 50S ribosomal subunit.

Functionally, binds to the 23S rRNA. This Staphylococcus saprophyticus subsp. saprophyticus (strain ATCC 15305 / DSM 20229 / NCIMB 8711 / NCTC 7292 / S-41) protein is Large ribosomal subunit protein uL15.